The primary structure comprises 198 residues: Recombination protein RecR (198 aa).

Residues 57-72 (CEKCNTFTEAQICEVC) form a C4-type zinc finger. Residues 80-175 (TLLCVVETPA…AVTRLARGVP (96 aa)) enclose the Toprim domain.

This sequence belongs to the RecR family.

Functionally, may play a role in DNA repair. It seems to be involved in an RecBC-independent recombinational process of DNA repair. It may act with RecF and RecO. The protein is Recombination protein RecR of Burkholderia cenocepacia (strain HI2424).